Reading from the N-terminus, the 425-residue chain is Serine--tRNA ligase (425 aa).

An L-serine-binding site is contributed by 230–232; sequence TAE. 261–263 serves as a coordination point for ATP; sequence RSE. Glu284 provides a ligand contact to L-serine. 348–351 is a binding site for ATP; sequence EISS. Ser384 contacts L-serine.

Belongs to the class-II aminoacyl-tRNA synthetase family. Type-1 seryl-tRNA synthetase subfamily. As to quaternary structure, homodimer. The tRNA molecule binds across the dimer.

It localises to the cytoplasm. It catalyses the reaction tRNA(Ser) + L-serine + ATP = L-seryl-tRNA(Ser) + AMP + diphosphate + H(+). The catalysed reaction is tRNA(Sec) + L-serine + ATP = L-seryl-tRNA(Sec) + AMP + diphosphate + H(+). Its pathway is aminoacyl-tRNA biosynthesis; selenocysteinyl-tRNA(Sec) biosynthesis; L-seryl-tRNA(Sec) from L-serine and tRNA(Sec): step 1/1. Its function is as follows. Catalyzes the attachment of serine to tRNA(Ser). Is also able to aminoacylate tRNA(Sec) with serine, to form the misacylated tRNA L-seryl-tRNA(Sec), which will be further converted into selenocysteinyl-tRNA(Sec). The sequence is that of Serine--tRNA ligase from Streptococcus pyogenes serotype M6 (strain ATCC BAA-946 / MGAS10394).